The primary structure comprises 318 residues: Annexin D6 (318 aa).

An N-acetylalanine modification is found at Ala-2. Annexin repeat units follow at residues Pro-11 to Leu-82, Asp-83 to Ser-154, Lys-168 to Lys-239, and Tyr-243 to Gly-314. The Ca(2+) site is built by Phe-24, Gly-26, Gly-28, and Glu-68. Phosphoserine is present on Ser-95. Phosphothreonine occurs at positions 100 and 112. A Phosphotyrosine modification is found at Tyr-129. Residues Ile-256, Arg-258, and Gly-260 each coordinate Ca(2+). Tyr-285 is subject to Phosphotyrosine. At Ser-290 the chain carries Phosphoserine. Residues Asp-300 and Thr-301 each coordinate Ca(2+).

It belongs to the annexin (TC 1.A.31.1) family. As to expression, expressed in flowers.

This chain is Annexin D6 (ANN6), found in Arabidopsis thaliana (Mouse-ear cress).